A 495-amino-acid chain; its full sequence is MKYRDLREFIALLEQRGELKRIQQSIDPYLEMTEIADRTLRVGGPALLFENPKGYDIPVLCNLFGTPQRVALGMGQEEVGALRDVGKLLAFLKEPDPPKGFRDLVEKLPQFKQILNMPTKRLSKAPCQEQVLQGDDVDLATLPVMHCWPQDVAPLVSWGLTVTRGPCKSRQNLGIYRQQVLGKNKLIMRWLSHRGGALDFQDWCQAHPGERFPVAVALGADPATLLAAVTPVPDSLSEYAFAGLLRGHKSEVVKCLSCDLEVPASAEIVLEGYIEPGETAPEGPYGDHTGYYNEVERFPVFTVTHLTQRDRPIYHSTYTGRPPDEPAVLGLALNEVFVPLLQKQFPEIVDFYLPPEGCSYRMAVVTMKKQYPGHAKRVMMGVWSFLRQFMYTKFVIVCDDDINARDWQDVIWALTTRMDPARDTLLIENTPIDYLDFASPVSGLGSKMGLDATNKWPGETQREWGHPIVMDEAVRARVDTLWNELDIFANDKDAQ.

Asn172 lines the Mn(2+) pocket. Prenylated FMN-binding positions include 175-177 (IYR), 189-191 (RWL), and 194-195 (RG). Glu238 serves as a coordination point for Mn(2+). Asp287 (proton donor) is an active-site residue.

Belongs to the UbiD family. As to quaternary structure, homohexamer. It depends on prenylated FMN as a cofactor. The cofactor is Mn(2+).

Its subcellular location is the cell membrane. The catalysed reaction is a 4-hydroxy-3-(all-trans-polyprenyl)benzoate + H(+) = a 2-(all-trans-polyprenyl)phenol + CO2. It functions in the pathway cofactor biosynthesis; ubiquinone biosynthesis. Catalyzes the decarboxylation of 3-octaprenyl-4-hydroxy benzoate to 2-octaprenylphenol, an intermediate step in ubiquinone biosynthesis. The protein is 3-octaprenyl-4-hydroxybenzoate carboxy-lyase of Edwardsiella ictaluri (strain 93-146).